Reading from the N-terminus, the 358-residue chain is Peptide chain release factor 1 (358 aa).

Q233 carries the N5-methylglutamine modification.

Belongs to the prokaryotic/mitochondrial release factor family. In terms of processing, methylated by PrmC. Methylation increases the termination efficiency of RF1.

Its subcellular location is the cytoplasm. Functionally, peptide chain release factor 1 directs the termination of translation in response to the peptide chain termination codons UAG and UAA. In Beijerinckia indica subsp. indica (strain ATCC 9039 / DSM 1715 / NCIMB 8712), this protein is Peptide chain release factor 1.